A 249-amino-acid polypeptide reads, in one-letter code: Pyridoxine 5'-phosphate synthase (249 aa).

Residue asparagine 7 coordinates 3-amino-2-oxopropyl phosphate. Position 9 to 10 (9 to 10) interacts with 1-deoxy-D-xylulose 5-phosphate; it reads DH. Arginine 18 is a 3-amino-2-oxopropyl phosphate binding site. The active-site Proton acceptor is the histidine 43. Arginine 45 and histidine 50 together coordinate 1-deoxy-D-xylulose 5-phosphate. The active-site Proton acceptor is the glutamate 70. Residue threonine 100 coordinates 1-deoxy-D-xylulose 5-phosphate. Histidine 190 functions as the Proton donor in the catalytic mechanism. 3-amino-2-oxopropyl phosphate contacts are provided by residues glycine 191 and 212 to 213; that span reads GH.

The protein belongs to the PNP synthase family. Homooctamer; tetramer of dimers.

It localises to the cytoplasm. The catalysed reaction is 3-amino-2-oxopropyl phosphate + 1-deoxy-D-xylulose 5-phosphate = pyridoxine 5'-phosphate + phosphate + 2 H2O + H(+). It functions in the pathway cofactor biosynthesis; pyridoxine 5'-phosphate biosynthesis; pyridoxine 5'-phosphate from D-erythrose 4-phosphate: step 5/5. Catalyzes the complicated ring closure reaction between the two acyclic compounds 1-deoxy-D-xylulose-5-phosphate (DXP) and 3-amino-2-oxopropyl phosphate (1-amino-acetone-3-phosphate or AAP) to form pyridoxine 5'-phosphate (PNP) and inorganic phosphate. The polypeptide is Pyridoxine 5'-phosphate synthase (Synechococcus sp. (strain CC9605)).